Consider the following 1117-residue polypeptide: ATP-dependent RNA helicase mtr4 (1117 aa).

The disordered stretch occupies residues 19 to 86 (KSLKEESKNS…DNQDLIPNND (68 aa)). Residues 65–79 (SATKRAKIENLKDNQ) are compositionally biased toward basic and acidic residues. In terms of domain architecture, Helicase ATP-binding spans 207 to 363 (IACIERQESV…WITKIHRQPC (157 aa)). ATP is bound at residue 220–227 (AHTSAGKT). The DEIH box motif lies at 311–314 (DEIH). The tract at residues 414–433 (GDDPAAMATKGNAKKGKTGK) is disordered. The Helicase C-terminal domain maps to 441–642 (DIYKIVKMIM…LSYNMILNLL (202 aa)).

It belongs to the helicase family. SKI2 subfamily. In terms of assembly, component of the TRAMP complex composed of at least cid14, mtr4, and air1.

Its subcellular location is the nucleus. Its function is as follows. Component of the TRAMP complex which has a poly(A) RNA polymerase activity and is involved in a post-transcriptional quality control mechanism limiting inappropriate expression of genetic information. Polyadenylation is required for the degradative activity of the exosome on several of its nuclear RNA substrates. Required for heterochromatic gene silencing at centromeric repeats by either exosome- or RNAi-mediated degradation of heterochromatic transcripts. The sequence is that of ATP-dependent RNA helicase mtr4 (mtr4) from Schizosaccharomyces pombe (strain 972 / ATCC 24843) (Fission yeast).